The chain runs to 446 residues: DDB1- and CUL4-associated factor 12-A (446 aa).

The span at 1 to 12 (MTRRSVSRKRRA) shows a compositional bias: basic residues. A disordered region spans residues 1 to 32 (MTRRSVSRKRRANPGSGPGEQSDWDHSAHKRK). 4 WD repeats span residues 132–173 (SHQS…PVCV), 177–215 (GHND…VNKS), 245–284 (PVNC…SKLL), and 333–370 (EQGS…FLED).

This sequence belongs to the WD repeat DCAF12 family. In terms of assembly, component of the DCX(DCAF12) E3 ubiquitin ligase complex, at least composed of cul4 (cul4a or cul4b), ddb1, dcaf12 and rbx1.

The protein localises to the cytoplasm. It localises to the cytoskeleton. Its subcellular location is the microtubule organizing center. It is found in the centrosome. The protein resides in the nucleus. It participates in protein modification; protein ubiquitination. In terms of biological role, substrate-recognition component of a DCX (DDB1-CUL4-X-box) E3 ubiquitin-protein ligase complex of the DesCEND (destruction via C-end degrons) pathway, which recognizes a C-degron located at the extreme C terminus of target proteins, leading to their ubiquitination and degradation. The C-degron recognized by the DesCEND pathway is usually a motif of less than ten residues and can be present in full-length proteins, truncated proteins or proteolytically cleaved forms. The DCX(DCAF12) complex specifically recognizes proteins with a diglutamate (Glu-Glu) at the C-terminus leading to their ubiquitination and degradation. Also directly recognizes the C-terminal glutamate-leucine (Glu-Leu) degron as an alternative degron in proteins leading to their ubiquitination and degradation. This chain is DDB1- and CUL4-associated factor 12-A (dcaf12-a), found in Xenopus laevis (African clawed frog).